Consider the following 1350-residue polypeptide: Protein transport protein SEC16A homolog (1350 aa).

Disordered stretches follow at residues 26-45 (YTPT…GSDS), 73-97 (LGND…SIAP), 964-1063 (MPPP…TRKV), 1118-1216 (AEEA…KPPI), and 1235-1350 (QVME…EVEL). The span at 35-45 (KELKFDDGSDS) shows a compositional bias: basic and acidic residues. S43 carries the post-translational modification Phosphoserine. Over residues 970-1002 (HSTTGNPQVNEYQHQQQEAAKLSYSQSANTMSS) the composition is skewed to polar residues. Over residues 1150–1168 (SPSSGSWSSGSPTPSENSP) the composition is skewed to low complexity. Composition is skewed to polar residues over residues 1195–1210 (TYNQ…PPVQ) and 1289–1316 (RSGS…GSVN). Residues 1317-1343 (SSSFMSPTSASTFRPSPLNSSSSSLGE) show a composition bias toward low complexity.

The protein belongs to the SEC16 family. In terms of assembly, interacts with SEC13A, SEC13B and SEC31A.

Its subcellular location is the golgi apparatus. The protein resides in the golgi stack. It localises to the endoplasmic reticulum. Functionally, required for efficient protein export from the endoplasmic reticulum (ER) to the Golgi by regulating COPII coat dynamics at the ER. Functions as a scaffold and regulator of COPII coat assembly at ER exit sites. The chain is Protein transport protein SEC16A homolog from Arabidopsis thaliana (Mouse-ear cress).